Reading from the N-terminus, the 274-residue chain is Large ribosomal subunit protein uL2cz/uL2cy (274 aa).

Disordered regions lie at residues 1–25 and 224–274; these read MAIH…VKSN and NPVD…RRSK.

The protein belongs to the universal ribosomal protein uL2 family. Part of the 50S ribosomal subunit.

The protein resides in the plastid. Its subcellular location is the chloroplast. This is Large ribosomal subunit protein uL2cz/uL2cy (rpl2-A) from Cucumis sativus (Cucumber).